We begin with the raw amino-acid sequence, 447 residues long: N-succinylarginine dihydrolase (447 aa).

Residues 19–28 (AGLSFGNEAS), Asn-110, and 137–138 (HR) each bind substrate. Residue Glu-174 is part of the active site. Arg-212 lines the substrate pocket. His-248 is a catalytic residue. Residues Asp-250 and Asn-359 each coordinate substrate. Residue Cys-365 is the Nucleophile of the active site.

Belongs to the succinylarginine dihydrolase family. As to quaternary structure, homodimer.

It carries out the reaction N(2)-succinyl-L-arginine + 2 H2O + 2 H(+) = N(2)-succinyl-L-ornithine + 2 NH4(+) + CO2. It functions in the pathway amino-acid degradation; L-arginine degradation via AST pathway; L-glutamate and succinate from L-arginine: step 2/5. Functionally, catalyzes the hydrolysis of N(2)-succinylarginine into N(2)-succinylornithine, ammonia and CO(2). In Escherichia coli O9:H4 (strain HS), this protein is N-succinylarginine dihydrolase.